Reading from the N-terminus, the 491-residue chain is Aspartyl/glutamyl-tRNA(Asn/Gln) amidotransferase subunit B (491 aa).

The protein belongs to the GatB/GatE family. GatB subfamily. In terms of assembly, heterotrimer of A, B and C subunits.

It carries out the reaction L-glutamyl-tRNA(Gln) + L-glutamine + ATP + H2O = L-glutaminyl-tRNA(Gln) + L-glutamate + ADP + phosphate + H(+). It catalyses the reaction L-aspartyl-tRNA(Asn) + L-glutamine + ATP + H2O = L-asparaginyl-tRNA(Asn) + L-glutamate + ADP + phosphate + 2 H(+). In terms of biological role, allows the formation of correctly charged Asn-tRNA(Asn) or Gln-tRNA(Gln) through the transamidation of misacylated Asp-tRNA(Asn) or Glu-tRNA(Gln) in organisms which lack either or both of asparaginyl-tRNA or glutaminyl-tRNA synthetases. The reaction takes place in the presence of glutamine and ATP through an activated phospho-Asp-tRNA(Asn) or phospho-Glu-tRNA(Gln). The protein is Aspartyl/glutamyl-tRNA(Asn/Gln) amidotransferase subunit B of Prochlorococcus marinus (strain NATL1A).